A 434-amino-acid chain; its full sequence is Histidinol dehydrogenase (434 aa).

NAD(+) contacts are provided by Y130, Q188, and N211. Positions 237, 259, and 262 each coordinate substrate. Zn(2+)-binding residues include Q259 and H262. Catalysis depends on proton acceptor residues E326 and H327. The substrate site is built by H327, D360, E414, and H419. D360 provides a ligand contact to Zn(2+). H419 contributes to the Zn(2+) binding site.

The protein belongs to the histidinol dehydrogenase family. In terms of assembly, homodimer. The cofactor is Zn(2+).

The catalysed reaction is L-histidinol + 2 NAD(+) + H2O = L-histidine + 2 NADH + 3 H(+). Its pathway is amino-acid biosynthesis; L-histidine biosynthesis; L-histidine from 5-phospho-alpha-D-ribose 1-diphosphate: step 9/9. In terms of biological role, catalyzes the sequential NAD-dependent oxidations of L-histidinol to L-histidinaldehyde and then to L-histidine. The sequence is that of Histidinol dehydrogenase from Escherichia coli (strain K12).